Consider the following 409-residue polypeptide: Tryptophan synthase beta chain (409 aa).

At lysine 95 the chain carries N6-(pyridoxal phosphate)lysine.

The protein belongs to the TrpB family. Tetramer of two alpha and two beta chains. The cofactor is pyridoxal 5'-phosphate.

It catalyses the reaction (1S,2R)-1-C-(indol-3-yl)glycerol 3-phosphate + L-serine = D-glyceraldehyde 3-phosphate + L-tryptophan + H2O. It participates in amino-acid biosynthesis; L-tryptophan biosynthesis; L-tryptophan from chorismate: step 5/5. Functionally, the beta subunit is responsible for the synthesis of L-tryptophan from indole and L-serine. The sequence is that of Tryptophan synthase beta chain from Pseudomonas syringae pv. syringae (strain B728a).